We begin with the raw amino-acid sequence, 408 residues long: uncharacterized protein (408 aa).

Disordered stretches follow at residues 218–265 (EPTA…TSER) and 367–408 (MESE…ETPN). The span at 369–379 (SEVINSSSSTS) shows a compositional bias: low complexity. Residues 394–408 (IVEEVPETAENETPN) show a composition bias toward acidic residues.

To C.elegans C05E11.1.

This is an uncharacterized protein from Arabidopsis thaliana (Mouse-ear cress).